The following is a 495-amino-acid chain: MAGIPPPTRNPEIKHNKIFINNQFVNSTSNKAYPVYNPCDNEKVCEVQEGDKSDIDKAVQACKAAFKRGTPWRRMDASRLGHLLYRLADLMERDIAYMASLETMDTGKPYKNSYQDMVHCIQVLRYFAGWADKNMGESIPVDGDFFCYTRNEPVGVCGLLIPYNYPMLMMTWKMAPALACGNCMIVKPAEQTPLTALYCASLIKEAGFPPGVVNVVPGFGKICGQYISSHQEINKVSFTGSTEVGMLVMQDAGKSNLKRCSMQLSGKCPLVVFEDTELDFAVQQAHEAAFQNMGQCRWSGSRTYVHENIYDEFVKRAVEKATSRKTGDPYEMDTEHGPQIDEEQYKKIMEFIKKGKDKGAQLKCGGNRHGDKGFYVEPTVFSDVTDEMKFSQEEIFGPVQLIMKFKDMDEVIDRCNNTDYGMAAAIFTNDINRSITFTHAMYCGTVWVNTYNHWFPQAPFGGYKKSGLYREMGKYTLQEYTEVKNIVYRIPQKNS.

This sequence belongs to the aldehyde dehydrogenase family. As to expression, lens.

Its function is as follows. Omega-crystallins are structural components of squids and octopi eye lens. Contains relatively little if any DHAL activity. In Nototodarus sloanii (Wellington flying squid), this protein is Omega-crystallin.